The chain runs to 249 residues: Triosephosphate isomerase (249 aa).

Substrate is bound at residue 9 to 11 (NWK). His94 acts as the Electrophile in catalysis. Glu166 functions as the Proton acceptor in the catalytic mechanism. Substrate-binding positions include Gly172 and 232 to 233 (GG).

The protein belongs to the triosephosphate isomerase family. As to quaternary structure, homodimer.

It localises to the cytoplasm. The enzyme catalyses D-glyceraldehyde 3-phosphate = dihydroxyacetone phosphate. The protein operates within carbohydrate biosynthesis; gluconeogenesis. It functions in the pathway carbohydrate degradation; glycolysis; D-glyceraldehyde 3-phosphate from glycerone phosphate: step 1/1. Involved in the gluconeogenesis. Catalyzes stereospecifically the conversion of dihydroxyacetone phosphate (DHAP) to D-glyceraldehyde-3-phosphate (G3P). In Xylella fastidiosa (strain 9a5c), this protein is Triosephosphate isomerase.